A 265-amino-acid chain; its full sequence is Transcriptional activator AggR (265 aa).

In terms of domain architecture, HTH araC/xylS-type spans 164–261 (DKVRNTIEKD…GITPKQFLTY (98 aa)). 2 DNA-binding regions (H-T-H motif) span residues 181–202 (AIIA…ESEY) and 228–251 (ISQI…VKHF).

As to quaternary structure, homodimer.

In terms of biological role, transcriptional activator of aggregative adherence fimbria I expression in enteroaggregative E.coli. The protein is Transcriptional activator AggR (aggR) of Escherichia coli.